Reading from the N-terminus, the 390-residue chain is uncharacterized protein (390 aa).

The next 12 helical transmembrane spans lie at 4 to 24 (IWLF…LSPL), 40 to 60 (GWMV…AGPI), 68 to 88 (TVML…GIAP), 98 to 118 (FAAG…IPVI), 130 to 150 (IATA…GFLA), 159 to 179 (FVLS…MPGI), 205 to 225 (VILL…SFLG), 236 to 256 (VSQI…GSLI), 273 to 293 (GMLL…LFLV), 295 to 315 (AGFF…MGVF), 329 to 349 (LSNA…GFLY), and 356 to 376 (GAVT…YQTI).

The protein belongs to the major facilitator superfamily.

Its subcellular location is the cell membrane. This is an uncharacterized protein from Bacillus subtilis (strain 168).